Reading from the N-terminus, the 212-residue chain is Uridine kinase (212 aa).

Position 12–19 (Gly12–Thr19) interacts with ATP.

This sequence belongs to the uridine kinase family.

The protein localises to the cytoplasm. It catalyses the reaction uridine + ATP = UMP + ADP + H(+). The catalysed reaction is cytidine + ATP = CMP + ADP + H(+). It participates in pyrimidine metabolism; CTP biosynthesis via salvage pathway; CTP from cytidine: step 1/3. It functions in the pathway pyrimidine metabolism; UMP biosynthesis via salvage pathway; UMP from uridine: step 1/1. This Streptococcus pneumoniae serotype 2 (strain D39 / NCTC 7466) protein is Uridine kinase.